Reading from the N-terminus, the 235-residue chain is Ribitol-5-phosphate cytidylyltransferase (235 aa).

CTP-binding positions include 7–10 (LAGG), 82–88 (GADRNTS), and S113.

This sequence belongs to the IspD/TarI cytidylyltransferase family. TarI subfamily.

The catalysed reaction is D-ribitol 5-phosphate + CTP + H(+) = CDP-L-ribitol + diphosphate. It participates in cell wall biogenesis; poly(ribitol phosphate) teichoic acid biosynthesis. Catalyzes the transfer of the cytidylyl group of CTP to D-ribitol 5-phosphate. This is Ribitol-5-phosphate cytidylyltransferase from Streptococcus pneumoniae serotype 2 (strain D39 / NCTC 7466).